The sequence spans 354 residues: DNA repair protein rhp57 (354 aa).

100–107 (GESGSGKS) is an ATP binding site.

This sequence belongs to the RecA family.

It is found in the nucleus. Involved in recombination DNA repair and in the repair of gamma-ray-induced damage. The protein is DNA repair protein rhp57 (rhp57) of Schizosaccharomyces pombe (strain 972 / ATCC 24843) (Fission yeast).